We begin with the raw amino-acid sequence, 93 residues long: MKYPKKVKTFCRYCGKHTLHEVERVSKGKASSLNWINRQKKRRGKVGNLGKFSKVPGGDKPTKRVNIRFRCTECKKAHHRPTWRAKRFELIER.

Residues Cys11, Cys14, Cys71, and Cys74 each coordinate Zn(2+). The segment at 11 to 74 (CRYCGKHTLH…VNIRFRCTEC (64 aa)) adopts a C4-type zinc-finger fold.

It belongs to the eukaryotic ribosomal protein eL42 family. Part of the 50S ribosomal subunit. The cofactor is Zn(2+).

In terms of biological role, binds to the 23S rRNA. The chain is Large ribosomal subunit protein eL42 from Archaeoglobus fulgidus (strain ATCC 49558 / DSM 4304 / JCM 9628 / NBRC 100126 / VC-16).